Reading from the N-terminus, the 127-residue chain is MWRNSEERENRTSGRSQGSYQEIIGRTWIFRGAHRGRVNKKNIVWHELIGLKVRVVNSTHPGYVGIEGYVIDETRNMLVIAGENKVWKVPKDVCIFEFETWDGTKIKISGEKLVGRPEMRLKKRWRK.

The protein belongs to the eukaryotic/archaeal RNase P protein component 1 family. In terms of assembly, consists of a catalytic RNA component and at least 4 protein subunits. Forms a subcomplex with Rnp4 which stimulates the catalytic RNA.

It localises to the cytoplasm. The catalysed reaction is Endonucleolytic cleavage of RNA, removing 5'-extranucleotides from tRNA precursor.. In terms of biological role, part of ribonuclease P, a protein complex that generates mature tRNA molecules by cleaving their 5'-ends. The RNA is catalytic, but its KM for pre-tRNA is 170-fold decreased in the presence of the 4 known protein subunits (Rnp1-4). The protein subunits also decrease the amount of Mg(2+) needed for activity. The sequence is that of Ribonuclease P protein component 1 from Pyrococcus furiosus (strain ATCC 43587 / DSM 3638 / JCM 8422 / Vc1).